We begin with the raw amino-acid sequence, 718 residues long: Catalase-peroxidase (718 aa).

Positions 1-24 (MDQKSDNAGKCPVAHTVPKGRSNR) are disordered. The tryptophyl-tyrosyl-methioninium (Trp-Tyr) (with M-243) cross-link spans 95 to 217 (WHSAGTYRIT…LAAVQMGLIY (123 aa)). The active-site Proton acceptor is the His96. The tryptophyl-tyrosyl-methioninium (Tyr-Met) (with W-95) cross-link spans 217–243 (YVNPEGPNGNPDPVAAAREIRETFARM). His258 provides a ligand contact to heme b.

This sequence belongs to the peroxidase family. Peroxidase/catalase subfamily. As to quaternary structure, homodimer or homotetramer. Heme b is required as a cofactor. Formation of the three residue Trp-Tyr-Met cross-link is important for the catalase, but not the peroxidase activity of the enzyme.

The catalysed reaction is H2O2 + AH2 = A + 2 H2O. The enzyme catalyses 2 H2O2 = O2 + 2 H2O. Functionally, bifunctional enzyme with both catalase and broad-spectrum peroxidase activity. This Sinorhizobium fredii (strain NBRC 101917 / NGR234) protein is Catalase-peroxidase.